A 284-amino-acid polypeptide reads, in one-letter code: Bifunctional protein FolD (284 aa).

NADP(+)-binding positions include 166 to 168 (GAS) and Ile232.

It belongs to the tetrahydrofolate dehydrogenase/cyclohydrolase family. As to quaternary structure, homodimer.

The enzyme catalyses (6R)-5,10-methylene-5,6,7,8-tetrahydrofolate + NADP(+) = (6R)-5,10-methenyltetrahydrofolate + NADPH. It catalyses the reaction (6R)-5,10-methenyltetrahydrofolate + H2O = (6R)-10-formyltetrahydrofolate + H(+). It functions in the pathway one-carbon metabolism; tetrahydrofolate interconversion. Its function is as follows. Catalyzes the oxidation of 5,10-methylenetetrahydrofolate to 5,10-methenyltetrahydrofolate and then the hydrolysis of 5,10-methenyltetrahydrofolate to 10-formyltetrahydrofolate. The chain is Bifunctional protein FolD from Shewanella halifaxensis (strain HAW-EB4).